A 62-amino-acid chain; its full sequence is Sperm histone (62 aa).

The interval 1 to 62 (MARYRRSRTR…GSRRRRRRRY (62 aa)) is disordered. Threonine 9 carries the phosphothreonine modification.

This sequence belongs to the protamine P1 family. As to expression, testis.

The protein resides in the nucleus. It is found in the chromosome. Its function is as follows. Protamines substitute for histones in the chromatin of sperm during the haploid phase of spermatogenesis. They compact sperm DNA into a highly condensed, stable and inactive complex. In Gallus gallus (Chicken), this protein is Sperm histone.